Here is a 2177-residue protein sequence, read N- to C-terminus: Mediator of RNA polymerase II transcription subunit 12 (2177 aa).

The tract at residues 12–35 (RPLKRPRLGPPDVYPQDPKQKEDE) is disordered. At lysine 80 the chain carries N6-acetyllysine. Tyrosine 166 carries the phosphotyrosine modification. Disordered regions lie at residues 323–344 (QSTSTLPTTPAPQPPTSSTPST), 627–669 (GAPG…MDID), 690–717 (TMPCEGKGSPSPEKPDVEKEVKPPPKEK), and 1241–1266 (TVTGGTEELPEEEGGGGSGGRRQGGR). A phosphoserine mark is found at serine 635, serine 665, serine 698, and serine 700. Residues 702 to 717 (EKPDVEKEVKPPPKEK) are compositionally biased toward basic and acidic residues. 2 positions are modified to phosphoserine: serine 1258 and serine 1269. Residues 1394–1411 (AETGSSSGSTASNMPSSS) are compositionally biased toward low complexity. 3 disordered regions span residues 1394–1415 (AETGSSSGSTASNMPSSSKTKP), 1450–1474 (ELEKGQHLGSSSRKERDRQKQKSMS), and 1738–1829 (YLEP…PGSI). 2 stretches are compositionally biased toward basic and acidic residues: residues 1450-1469 (ELEKGQHLGSSSRKERDRQK) and 1758-1771 (EPEKKAPEPPKTDK). Residues 1616 to 2051 (LAKKLQKELG…VRSTAILPEQ (436 aa)) are interaction with CTNNB1 and GLI3. Basic residues predominate over residues 1784 to 1793 (KKSTKGKKRS). At lysine 1798 the chain carries N6-acetyllysine. Arginine 1899 is subject to Asymmetric dimethylarginine; alternate. At arginine 1899 the chain carries Omega-N-methylarginine; alternate. Arginine 1910 carries the omega-N-methylarginine modification. 2 disordered regions span residues 1919 to 1938 (QGMLGQSSVHQMTPSSSYGL) and 1967 to 1989 (SYSSQPYQSTHPSTNPTLVDPTR). Residues 1927 to 1938 (VHQMTPSSSYGL) show a composition bias toward polar residues. The span at 1967–1980 (SYSSQPYQSTHPST) shows a compositional bias: low complexity. Asymmetric dimethylarginine occurs at positions 1994 and 2015. Composition is skewed to low complexity over residues 2115-2125 (QHQQQQQQQAA), 2133-2149 (SQPQFQRQGLQQTQQQQ), and 2158-2171 (LQQQLSNTQPQPST). 2 disordered regions span residues 2115–2149 (QHQQQQQQQAAPPQPQPQSQPQFQRQGLQQTQQQQ) and 2158–2177 (LQQQLSNTQPQPSTNIFGRY).

The protein belongs to the Mediator complex subunit 12 family. As to quaternary structure, component of the Mediator complex, which is composed of MED1, MED4, MED6, MED7, MED8, MED9, MED10, MED11, MED12, MED13, MED13L, MED14, MED15, MED16, MED17, MED18, MED19, MED20, MED21, MED22, MED23, MED24, MED25, MED26, MED27, MED29, MED30, MED31, CCNC, CDK8 and CDC2L6/CDK11. The MED12, MED13, CCNC and CDK8 subunits form a distinct module termed the CDK8 module. Mediator containing the CDK8 module is less active than Mediator lacking this module in supporting transcriptional activation. Individual preparations of the Mediator complex lacking one or more distinct subunits have been variously termed ARC, CRSP, DRIP, PC2, SMCC and TRAP. Also interacts with CTNNB1 and GLI3. As to expression, ubiquitous.

It localises to the nucleus. Its function is as follows. Component of the Mediator complex, a coactivator involved in the regulated transcription of nearly all RNA polymerase II-dependent genes. Mediator functions as a bridge to convey information from gene-specific regulatory proteins to the basal RNA polymerase II transcription machinery. Mediator is recruited to promoters by direct interactions with regulatory proteins and serves as a scaffold for the assembly of a functional pre-initiation complex with RNA polymerase II and the general transcription factors. This subunit may specifically regulate transcription of targets of the Wnt signaling pathway and SHH signaling pathway. The polypeptide is Mediator of RNA polymerase II transcription subunit 12 (MED12) (Homo sapiens (Human)).